The chain runs to 203 residues: 2-phospho-L-lactate guanylyltransferase (203 aa).

Belongs to the CofC family. As to quaternary structure, homodimer.

The catalysed reaction is (2S)-2-phospholactate + GTP + H(+) = (2S)-lactyl-2-diphospho-5'-guanosine + diphosphate. Its pathway is cofactor biosynthesis; coenzyme F420 biosynthesis. In terms of biological role, guanylyltransferase that catalyzes the activation of (2S)-2-phospholactate (2-PL) as (2S)-lactyl-2-diphospho-5'-guanosine, via the condensation of 2-PL with GTP. It is involved in the biosynthesis of coenzyme F420, a hydride carrier cofactor. The chain is 2-phospho-L-lactate guanylyltransferase from Halomicrobium mukohataei (strain ATCC 700874 / DSM 12286 / JCM 9738 / NCIMB 13541) (Haloarcula mukohataei).